Reading from the N-terminus, the 780-residue chain is Neutral ceramidase (780 aa).

Topologically, residues 1-12 (MAKRTFSNLETF) are cytoplasmic. The chain crosses the membrane as a helical; Signal-anchor for type II membrane protein span at residues 13–33 (LIFLLVMMSAITVALLSLLFI). The Lumenal segment spans residues 34–780 (TSGTIENHKD…TSPAFEVVTI (747 aa)). Positions 47-90 (HFFSTTQSPPATQGSTAAQRSTATQHSTATQSSTATQTSPVPLT) are disordered. Residues 57–85 (ATQGSTAAQRSTATQHSTATQSSTATQTS) are compositionally biased toward low complexity. Residue Thr-62 is glycosylated (O-linked (GalNAc...) threonine). Residue Ser-67 is glycosylated (O-linked (GalNAc...) serine). Residues Thr-68 and Thr-70 are each glycosylated (O-linked (GalNAc...) threonine). An O-linked (GalNAc...) serine glycan is attached at Ser-73. O-linked (GalNAc...) threonine glycosylation is found at Thr-74 and Thr-76. Ser-78 and Ser-79 each carry an O-linked (GalNAc...) serine glycan. Residues Thr-80, Thr-82, and Thr-84 are each glycosylated (O-linked (GalNAc...) threonine). Residue Asn-98 is glycosylated (N-linked (GlcNAc...) asparagine). A Ca(2+)-binding site is contributed by Leu-134. N-linked (GlcNAc...) asparagine glycosylation is present at Asn-151. His-194 lines the Zn(2+) pocket. Residue Asn-217 is glycosylated (N-linked (GlcNAc...) asparagine). His-303 serves as a coordination point for Zn(2+). N-linked (GlcNAc...) asparagine glycosylation occurs at Asn-308. Ser-354 (nucleophile) is an active-site residue. Cystine bridges form between Cys-362/Cys-376 and Cys-369/Cys-384. N-linked (GlcNAc...) asparagine glycosylation is found at Asn-440 and Asn-468. The cysteines at positions 448 and 498 are disulfide-linked. A Zn(2+)-binding site is contributed by Glu-540. Residue Asn-564 is glycosylated (N-linked (GlcNAc...) asparagine). Residue Tyr-579 coordinates Zn(2+). Ca(2+)-binding residues include Asp-712, Ser-714, and Thr-717. N-linked (GlcNAc...) asparagine glycosylation is present at Asn-730. The segment at 770-780 (GTSPAFEVVTI) is required for correct folding and localization. The O-linked (GalNAc...) threonine glycan is linked to Thr-779.

Belongs to the neutral ceramidase family. It depends on Zn(2+) as a cofactor. Post-translationally, proteolytic cleavage of the N-terminus removes the signal-anchor and produces a soluble form of the protein. In terms of processing, N-glycosylated. Required for enzyme activity. O-glycosylated. Required to retain it as a type II membrane protein at the cell surface. Post-translationally, phosphorylated. May prevent ubiquitination and subsequent degradation. In terms of processing, ubiquitinated, leading to its degradation by the proteasome. Ubiquitination is triggered by nitric oxide. Primarily expressed in intestine. Ubiquitously expressed with higher levels in kidney, skeletal muscle and heart. The ubiquitous expression observed for ASAH2 might be an experimental artifact due to the paralog ASAH2B.

Its subcellular location is the cell membrane. It localises to the membrane raft. The protein localises to the membrane. It is found in the caveola. The protein resides in the golgi apparatus membrane. Its subcellular location is the mitochondrion. It localises to the secreted. The protein localises to the extracellular exosome. It carries out the reaction an N-acylsphing-4-enine + H2O = sphing-4-enine + a fatty acid. It catalyses the reaction N-dodecanoylsphing-4-enine + H2O = dodecanoate + sphing-4-enine. The catalysed reaction is N-hexadecanoylsphing-4-enine + H2O = sphing-4-enine + hexadecanoate. The enzyme catalyses N-octanoylsphing-4-enine + H2O = octanoate + sphing-4-enine. It carries out the reaction N-(hexanoyl)sphing-4-enine + H2O = hexanoate + sphing-4-enine. It catalyses the reaction N-octadecanoylsphing-4-enine + H2O = sphing-4-enine + octadecanoate. The catalysed reaction is N-tetradecanoylsphing-4-enine + H2O = tetradecanoate + sphing-4-enine. The enzyme catalyses N-(9Z-octadecenoyl)-sphing-4-enine + H2O = sphing-4-enine + (9Z)-octadecenoate. It carries out the reaction N-(15Z-tetracosenoyl)-sphing-4-enine + H2O = (15Z)-tetracosenoate + sphing-4-enine. It catalyses the reaction sphinganine + hexadecanoate = N-hexadecanoylsphinganine + H2O. The catalysed reaction is N-(octadecanoyl)-sphinganine + H2O = sphinganine + octadecanoate. The protein operates within lipid metabolism; sphingolipid metabolism. With respect to regulation, inhibited by dithiothreitol (DTT) and 2-mercaptoethanol. Activity is mildly stimulated by Ca(2+) and Mg(2+), but is not inhibited by EDTA. Activity is inhibited by millimolar levels of Fe(2+), Zn(2+) and Cu(2+). Inhibited by cholesterol. In terms of biological role, plasma membrane ceramidase that hydrolyzes sphingolipid ceramides into sphingosine and free fatty acids at neutral pH. Ceramides, sphingosine, and its phosphorylated form sphingosine-1-phosphate are bioactive lipids that mediate cellular signaling pathways regulating several biological processes including cell proliferation, apoptosis and differentiation. Also catalyzes the reverse reaction allowing the synthesis of ceramides from fatty acids and sphingosine. Together with sphingomyelinase, participates in the production of sphingosine and sphingosine-1-phosphate from the degradation of sphingomyelin, a sphingolipid enriched in the plasma membrane of cells. Also participates in the hydrolysis of ceramides from the extracellular milieu allowing the production of sphingosine-1-phosphate inside and outside cells. This is the case for instance with the digestion of dietary sphingolipids in the intestinal tract. This Homo sapiens (Human) protein is Neutral ceramidase (ASAH2).